A 688-amino-acid polypeptide reads, in one-letter code: Collagen alpha-2(IX) chain (688 aa).

Residues 1–22 form the signal peptide; it reads MTAVPAPRSLFVLLQVLWLALA. Residues 26–162 are triple-helical region 4 (COL4); it reads GPPGEPGPPG…PGKPGRPGTI (137 aa). Residues 26-171 form a disordered region; sequence GPPGEPGPPG…IQGLEGSADF (146 aa). Pro residues-rich tracts occupy residues 28-42 and 105-126; these read PGEP…PPGV and LPGP…PGPV. The span at 128 to 137 shows a compositional bias: low complexity; that stretch reads LPGEIGTPGP. Pro residues predominate over residues 138–156; the sequence is KGDPGPEGPSGPPGPPGKP. Residue Pro159 is modified to 4-hydroxyproline. The interval 163 to 179 is nonhelical region 4 (NC4); sequence QGLEGSADFLCPTNCPA. Residue Ser168 is glycosylated (O-linked (Xyl...) (glycosaminoglycan) serine). The interval 180–518 is triple-helical region 3 (COL3); the sequence is GVKGPQGLQG…PGRQGVVGRA (339 aa). At Lys182 the chain carries 5-hydroxylysine. Lys182 is a glycosylation site (O-linked (Gal...) hydroxylysine). The interval 183-517 is disordered; the sequence is GPQGLQGVKG…QPGRQGVVGR (335 aa). Composition is skewed to low complexity over residues 289-314 and 392-412; these read PQGI…PGIP and RGPV…EQGP. Residues 435-444 are compositionally biased toward gly residues; it reads GPRGGVGDPG. Residues 502-517 show a composition bias toward low complexity; sequence DRGVPGQPGRQGVVGR. The interval 519–548 is nonhelical region 3 (NC3); sequence ASDQHIVDVVLKMIQEQLAEVAVSAKREAL. Residues 549–631 are triple-helical region 2 (COL2); sequence GAAGMVGLPG…PGLPGRPGQA (83 aa). The segment at 553–664 is disordered; the sequence is MVGLPGPPGP…GPVGLPGFCE (112 aa). A compositionally biased stretch (basic and acidic residues) spans 598 to 610; it reads KRGEKGDRGEMGH. Residues 632 to 633 form a nonhelical region 2 (NC2) region; that stretch reads IN. The interval 634 to 663 is triple-helical region 1 (COL1); sequence GKDGDRGSPGAPGEAGRPGRPGPVGLPGFC. Positions 664-688 are nonhelical region 1 (NC1); sequence EPAACLGASAYTSARLTEPGSIKGP.

It belongs to the fibril-associated collagens with interrupted helices (FACIT) family. Heterotrimer of an alpha 1(IX), an alpha 2(IX) and an alpha 3(IX) chain. The chains are linked to each other by interchain disulfide bonds. Trimers are also cross-linked via hydroxylysines. Covalently linked to the telopeptides of type II collagen by lysine-derived cross-links. Post-translationally, prolines at the third position of the tripeptide repeating unit (G-X-Y) are hydroxylated in some or all of the chains.

It localises to the secreted. The protein resides in the extracellular space. The protein localises to the extracellular matrix. Its function is as follows. Structural component of hyaline cartilage and vitreous of the eye. The sequence is that of Collagen alpha-2(IX) chain (Col9a2) from Mus musculus (Mouse).